The chain runs to 455 residues: Phosphomethylpyrimidine synthase (455 aa).

Substrate contacts are provided by residues N80, M109, Y139, H175, S195–G197, D236–R239, and E275. Position 279 (H279) interacts with Zn(2+). Position 302 (Y302) interacts with substrate. Residue H343 participates in Zn(2+) binding. Residues C423, C426, and C431 each contribute to the [4Fe-4S] cluster site.

It belongs to the ThiC family. [4Fe-4S] cluster serves as cofactor.

It carries out the reaction 5-amino-1-(5-phospho-beta-D-ribosyl)imidazole + S-adenosyl-L-methionine = 4-amino-2-methyl-5-(phosphooxymethyl)pyrimidine + CO + 5'-deoxyadenosine + formate + L-methionine + 3 H(+). It functions in the pathway cofactor biosynthesis; thiamine diphosphate biosynthesis. Functionally, catalyzes the synthesis of the hydroxymethylpyrimidine phosphate (HMP-P) moiety of thiamine from aminoimidazole ribotide (AIR) in a radical S-adenosyl-L-methionine (SAM)-dependent reaction. In Synechococcus sp. (strain JA-3-3Ab) (Cyanobacteria bacterium Yellowstone A-Prime), this protein is Phosphomethylpyrimidine synthase.